Consider the following 517-residue polypeptide: Amidophosphoribosyltransferase (517 aa).

N-acetylmethionine is present on Met-1. The propeptide occupies 1–11 (MELEELGIREE). Cys-12 acts as the Nucleophile in catalysis. In terms of domain architecture, Glutamine amidotransferase type-2 spans 12–261 (CGVFGCIASG…PGEIVEISRH (250 aa)). Cys-280 contacts [4Fe-4S] cluster. Positions 327, 389, and 390 each coordinate Mg(2+). [4Fe-4S] cluster is bound by residues Cys-426, Cys-503, and Cys-506.

It in the C-terminal section; belongs to the purine/pyrimidine phosphoribosyltransferase family. In terms of assembly, homotetramer. Mg(2+) is required as a cofactor. The cofactor is [4Fe-4S] cluster. As to expression, ubiquitously expressed.

It catalyses the reaction 5-phospho-beta-D-ribosylamine + L-glutamate + diphosphate = 5-phospho-alpha-D-ribose 1-diphosphate + L-glutamine + H2O. Its pathway is purine metabolism; IMP biosynthesis via de novo pathway; N(1)-(5-phospho-D-ribosyl)glycinamide from 5-phospho-alpha-D-ribose 1-diphosphate: step 1/2. In terms of biological role, catalyzes the formation of phosphoribosylamine from phosphoribosylpyrophosphate (PRPP) and glutamine. The polypeptide is Amidophosphoribosyltransferase (PPAT) (Homo sapiens (Human)).